A 487-amino-acid chain; its full sequence is MKYKDLRDFLVQLEQRGDLKRVDIEVDPHLEMTEICDRLLKQAGPAVLFERPAGHTIPVLGNLFGTPERVALGMGQTSVSALREVGKLLAYLKEPDPPKGLRDAWEKLPVLKQVLNMAPKQLASAPCQEIIWEGADVDLGKLPIQTCWPGDVAPLITWGLTVTRGPHKSRQNLGIYRQQVIAPNKVIMRWLAHRGGALDYRDFCQIYPGQPYPVAVALGADPATILGAVTPVPDSLSEYQFAGLLRGAKTEVVKCLTHDLQVPASAEIVLEGYIHPDEMAVEGPYGDHTGYYNEQETFPVFTIERITMRRNPIYHSTYTGKPPDEPAILGVALNEVFVPLLQKQFTEITDFYLPPEGCSYRLAVVSMKKQYPGHAKRVMFGIWSFLRQFMYTKFIIVTDDDIDIRDWKEVVWAMTTRVDPVRDTLIVENTPIDYLDFASPVSGLGSKMGLDATNKWPGETTREWGCPIEMDAAVKTRIDHLWQQLPF.

Asparagine 172 is a Mn(2+) binding site. Prenylated FMN contacts are provided by residues 175–177, 189–191, and 194–195; these read IYR, RWL, and RG. Residue glutamate 238 coordinates Mn(2+). Aspartate 287 serves as the catalytic Proton donor.

The protein belongs to the UbiD family. Homohexamer. Prenylated FMN is required as a cofactor. Requires Mn(2+) as cofactor.

Its subcellular location is the cell membrane. It carries out the reaction a 4-hydroxy-3-(all-trans-polyprenyl)benzoate + H(+) = a 2-(all-trans-polyprenyl)phenol + CO2. It functions in the pathway cofactor biosynthesis; ubiquinone biosynthesis. Functionally, catalyzes the decarboxylation of 3-octaprenyl-4-hydroxy benzoate to 2-octaprenylphenol, an intermediate step in ubiquinone biosynthesis. This chain is 3-octaprenyl-4-hydroxybenzoate carboxy-lyase, found in Nitrosomonas europaea (strain ATCC 19718 / CIP 103999 / KCTC 2705 / NBRC 14298).